The following is a 376-amino-acid chain: Lipoyl synthase 1, chloroplastic (376 aa).

A compositionally biased stretch (polar residues) spans 1-13; the sequence is MIEQSLSKPSFSL. Disordered regions lie at residues 1-25 and 47-75; these read MIEQ…KSKS and IDAK…DPNV. The transit peptide at 1-35 directs the protein to the chloroplast; the sequence is MIEQSLSKPSFSLSIPIPQPPKSKSSFLCSYSKIR. [4Fe-4S] cluster-binding residues include cysteine 107, cysteine 112, cysteine 118, cysteine 138, cysteine 142, cysteine 145, and serine 353. Residues 121–342 form the Radical SAM core domain; that stretch reads GGGDGIATAT…KEYGESIGFR (222 aa).

The protein belongs to the radical SAM superfamily. Lipoyl synthase family. [4Fe-4S] cluster is required as a cofactor.

The protein localises to the plastid. Its subcellular location is the chloroplast. The enzyme catalyses [[Fe-S] cluster scaffold protein carrying a second [4Fe-4S](2+) cluster] + N(6)-octanoyl-L-lysyl-[protein] + 2 oxidized [2Fe-2S]-[ferredoxin] + 2 S-adenosyl-L-methionine + 4 H(+) = [[Fe-S] cluster scaffold protein] + N(6)-[(R)-dihydrolipoyl]-L-lysyl-[protein] + 4 Fe(3+) + 2 hydrogen sulfide + 2 5'-deoxyadenosine + 2 L-methionine + 2 reduced [2Fe-2S]-[ferredoxin]. It participates in protein modification; protein lipoylation via endogenous pathway; protein N(6)-(lipoyl)lysine from octanoyl-[acyl-carrier-protein]: step 2/2. Its function is as follows. Catalyzes the radical-mediated insertion of two sulfur atoms into the C-6 and C-8 positions of the octanoyl moiety bound to the lipoyl domains of lipoate-dependent enzymes, thereby converting the octanoylated domains into lipoylated derivatives. The chain is Lipoyl synthase 1, chloroplastic from Populus trichocarpa (Western balsam poplar).